Reading from the N-terminus, the 219-residue chain is MKTETGSNNNNTTVVNMDFDMYPSISGKQQDPVREVVMKYIDYFLPDASGTSAVAIDNKIEQAMDLVKSHLMIAVREEVEVLKERISELMDKINKLELENSILKSNIPQETLQQLQLQLQLAAPPATPAIQAAPAVQSVVAPAAAGQAVQQQAAGAVAVTGVATSPASAVVPTSIPNGSAENGSSAVESAAVSVEQQVQQVTSAAAAAASVVTANGPMS.

A leucine-zipper region spans residues 82–103; that stretch reads LKERISELMDKINKLELENSIL.

Belongs to the TSC-22/Dip/Bun family. As to expression, anterior dorsal follicle cells at stages 10-12 of oogenesis.

Its subcellular location is the cytoplasm. The protein resides in the nucleus. Functionally, probable transcription factor required for peripheral nervous system morphogenesis, eye development and oogenesis. May be required for the transmission of the dpp signal and for a morphogenetic movement of the medulla in the brain that reorients the second optic lobe relative to the first. Plays a role in determining proper dorsal cell fates leading to the formation of the dorsal appendages. The sequence is that of Protein bunched, class 1/class 3/D/E isoforms (bun) from Drosophila melanogaster (Fruit fly).